A 61-amino-acid polypeptide reads, in one-letter code: Small ribosomal subunit protein uS14 (61 aa).

Residues Cys-24, Cys-27, Cys-40, and Cys-43 each coordinate Zn(2+).

It belongs to the universal ribosomal protein uS14 family. Zinc-binding uS14 subfamily. As to quaternary structure, part of the 30S ribosomal subunit. Contacts proteins S3 and S10. Requires Zn(2+) as cofactor.

Functionally, binds 16S rRNA, required for the assembly of 30S particles and may also be responsible for determining the conformation of the 16S rRNA at the A site. This Bifidobacterium adolescentis (strain ATCC 15703 / DSM 20083 / NCTC 11814 / E194a) protein is Small ribosomal subunit protein uS14.